The following is a 212-amino-acid chain: Pyridoxine/pyridoxamine 5'-phosphate oxidase (212 aa).

Residues 8–11 (RTDY) and Lys-66 each bind substrate. FMN is bound by residues 61-66 (RIVLLK), 76-77 (FT), Lys-83, and Gln-105. Tyr-123, Arg-127, and Ser-131 together coordinate substrate. FMN-binding positions include 140–141 (QS) and Trp-184. 190 to 192 (RLH) provides a ligand contact to substrate. Residue Arg-194 coordinates FMN.

The protein belongs to the pyridoxamine 5'-phosphate oxidase family. In terms of assembly, homodimer. FMN serves as cofactor.

The enzyme catalyses pyridoxamine 5'-phosphate + O2 + H2O = pyridoxal 5'-phosphate + H2O2 + NH4(+). It catalyses the reaction pyridoxine 5'-phosphate + O2 = pyridoxal 5'-phosphate + H2O2. It participates in cofactor metabolism; pyridoxal 5'-phosphate salvage; pyridoxal 5'-phosphate from pyridoxamine 5'-phosphate: step 1/1. Its pathway is cofactor metabolism; pyridoxal 5'-phosphate salvage; pyridoxal 5'-phosphate from pyridoxine 5'-phosphate: step 1/1. Catalyzes the oxidation of either pyridoxine 5'-phosphate (PNP) or pyridoxamine 5'-phosphate (PMP) into pyridoxal 5'-phosphate (PLP). The sequence is that of Pyridoxine/pyridoxamine 5'-phosphate oxidase from Ralstonia pickettii (strain 12J).